The following is a 426-amino-acid chain: Docking protein 3 (426 aa).

Residues 4-115 form the PH domain; sequence PVKDGIIYVQ…WIEQLCQLAF (112 aa). An IRS-type PTB domain is found at 145-249; it reads DLTEFPVLVL…ACQQQGQESP (105 aa). The segment at 243–282 is disordered; it reads QQGQESPQPSAQGLSNQPWGAEAEDPQCSPTLGRAHSGSH. Polar residues predominate over residues 247 to 260; it reads ESPQPSAQGLSNQP. At Tyr-331 the chain carries Phosphotyrosine. A disordered region spans residues 357–426; sequence GCRQAPEGHS…RDGPGARDWS (70 aa). Basic residues predominate over residues 402–411; it reads KPQRTLRAKL.

This sequence belongs to the DOK family. Type A subfamily. Homooligomer. Interacts with GRB2 and INPP5D/SHIP. In terms of processing, tyrosine-phosphorylated in the presence of GRB2.

The protein resides in the cytoplasm. It is found in the cell membrane. In terms of biological role, DOK proteins are enzymatically inert adaptor or scaffolding proteins. They provide a docking platform for the assembly of multimolecular signaling complexes. Plays a role as negative regulator of the mobilization of calcium ions and of calcium signaling. In Gallus gallus (Chicken), this protein is Docking protein 3 (DOK3).